We begin with the raw amino-acid sequence, 247 residues long: MEAPRGWLVIMISVLAVSLASSAAQDTCRDLDGRDGAARKPGRPGRPGPKGERGEPGAPAFQTGIRGLKGDQGESGSPGKPGRMGYPGPSGPPGLPGLPGLKGIKGNPGNIKDQRRPAFSAVRQNPPTSGNVVIFDEVITNQEGAYKSQLGQFICDVPGYYYFTFQVVSKWDLCLYIMSSRRDQVQQSLGFCDFNSKGLFQVVSGGTVLQLQRGDKVWIQRDPNKGRIYQGSEADSVFSGFLIFPST.

The signal sequence occupies residues 1–24; that stretch reads MEAPRGWLVIMISVLAVSLASSAA. The segment at 26 to 116 is disordered; it reads DTCRDLDGRD…NPGNIKDQRR (91 aa). Over residues 27 to 38 the composition is skewed to basic and acidic residues; the sequence is TCRDLDGRDGAA. Positions 33-111 constitute a Collagen-like domain; sequence GRDGAARKPG…KGIKGNPGNI (79 aa). A 4-hydroxyproline mark is found at P41 and P47. The residue at position 50 (K50) is a 5-hydroxylysine. O-linked (Gal...) hydroxylysine glycosylation is present at K50. Residues P56 and P59 each carry the 4-hydroxyproline modification. K69 carries the post-translational modification 5-hydroxylysine. An O-linked (Gal...) hydroxylysine glycan is attached at K69. 4-hydroxyproline is present on residues P81 and P87. The span at 98 to 109 shows a compositional bias: low complexity; sequence LPGLKGIKGNPG. K102 bears the 5-hydroxylysine mark. O-linked (Gal...) hydroxylysine glycosylation is present at K102. The C1q domain occupies 112-247; the sequence is KDQRRPAFSA…FSGFLIFPST (136 aa). C174 and C192 are disulfide-bonded. Ca(2+) is bound at residue Q201.

As to quaternary structure, core component of the complement C1 complex, a calcium-dependent complex composed of 1 molecule of the C1Q subcomplex, 2 molecules of C1R and 2 molecules of C1S. The C1Q subcomplex is composed 18 subunits: 3 chains of C1QA, C1QB, and C1QC trimerize to form 6 collagen-like triple helices connected to six globular ligand-recognition modules (C1q domain). Interacts with CR1 (via Sushi 24 and Sushi 25 domains). Interacts (via C-terminus) with CD33; this interaction activates CD33 inhibitory motifs. O-linked glycans are assumed to be the Glc-Gal disaccharides typically found as secondary modifications of hydroxylated lysines in collagen-like domains.

The protein resides in the secreted. It is found in the cell surface. Its activity is regulated as follows. The C1Q subcomplex is inhibited by sulfated molecules, such as triterpenoid sulfates, heparan sulfate, or chondroitin sulfates. Core component of the complement C1 complex, a multiprotein complex that initiates the classical pathway of the complement system, a cascade of proteins that leads to phagocytosis and breakdown of pathogens and signaling that strengthens the adaptive immune system. The classical complement pathway is initiated by the C1Q subcomplex of the C1 complex, which specifically binds IgG or IgM immunoglobulins complexed with antigens, forming antigen-antibody complexes on the surface of pathogens: C1QA, together with C1QB and C1QC, specifically recognizes and binds the Fc regions of IgG or IgM via its C1q domain. Immunoglobulin-binding activates the proenzyme C1R, which cleaves C1S, initiating the proteolytic cascade of the complement system. The C1Q subcomplex is activated by a hexamer of IgG complexed with antigens, while it is activated by a pentameric IgM. The C1Q subcomplex also recognizes and binds phosphatidylserine exposed on the surface of cells undergoing programmed cell death, possibly promoting activation of the complement system. This Sus scrofa (Pig) protein is Complement C1q subcomponent subunit A (C1QA).